A 391-amino-acid chain; its full sequence is Ribosomal RNA small subunit methyltransferase H (391 aa).

A disordered region spans residues 1-23; that stretch reads MDVDVQDDVQGRAGEGAEERAHD. Residues 59-61, aspartate 78, leucine 112, aspartate 126, and glutamine 133 each bind S-adenosyl-L-methionine; that span reads GGH. Residues 284-391 are disordered; sequence SSSSAPPDLP…EPGATVERTP (108 aa). The segment covering 368-380 has biased composition (basic and acidic residues); that stretch reads RTQEFETHPHLEP.

Belongs to the methyltransferase superfamily. RsmH family.

It is found in the cytoplasm. The catalysed reaction is cytidine(1402) in 16S rRNA + S-adenosyl-L-methionine = N(4)-methylcytidine(1402) in 16S rRNA + S-adenosyl-L-homocysteine + H(+). Specifically methylates the N4 position of cytidine in position 1402 (C1402) of 16S rRNA. The sequence is that of Ribosomal RNA small subunit methyltransferase H from Kineococcus radiotolerans (strain ATCC BAA-149 / DSM 14245 / SRS30216).